Here is a 493-residue protein sequence, read N- to C-terminus: Glutamate--tRNA ligase (493 aa).

A 'HIGH' region motif is present at residues 10–20; it reads PSPTGDPHVGT. Cys-107, Cys-109, Cys-134, and His-136 together coordinate Zn(2+). Positions 251–255 match the 'KMSKS' region motif; that stretch reads KLSKR. ATP is bound at residue Lys-254.

It belongs to the class-I aminoacyl-tRNA synthetase family. Glutamate--tRNA ligase type 1 subfamily. In terms of assembly, monomer. The cofactor is Zn(2+).

It localises to the cytoplasm. It catalyses the reaction tRNA(Glu) + L-glutamate + ATP = L-glutamyl-tRNA(Glu) + AMP + diphosphate. In terms of biological role, catalyzes the attachment of glutamate to tRNA(Glu) in a two-step reaction: glutamate is first activated by ATP to form Glu-AMP and then transferred to the acceptor end of tRNA(Glu). The chain is Glutamate--tRNA ligase from Stutzerimonas stutzeri (strain A1501) (Pseudomonas stutzeri).